The sequence spans 177 residues: Translation initiation factor IF-3 (177 aa).

The protein belongs to the IF-3 family. In terms of assembly, monomer.

The protein localises to the cytoplasm. Its function is as follows. IF-3 binds to the 30S ribosomal subunit and shifts the equilibrium between 70S ribosomes and their 50S and 30S subunits in favor of the free subunits, thus enhancing the availability of 30S subunits on which protein synthesis initiation begins. The polypeptide is Translation initiation factor IF-3 (Rhizobium meliloti (strain 1021) (Ensifer meliloti)).